The following is a 420-amino-acid chain: L-rhamnose isomerase (420 aa).

Mn(2+) is bound by residues H264, D296, and D298.

This sequence belongs to the rhamnose isomerase family. Requires Mn(2+) as cofactor.

It localises to the cytoplasm. The catalysed reaction is L-rhamnopyranose = L-rhamnulose. The protein operates within carbohydrate degradation; L-rhamnose degradation; glycerone phosphate from L-rhamnose: step 1/3. In terms of biological role, catalyzes the interconversion of L-rhamnose and L-rhamnulose. This Listeria monocytogenes serovar 1/2a (strain ATCC BAA-679 / EGD-e) protein is L-rhamnose isomerase.